Consider the following 208-residue polypeptide: MASKCPKCDKTVYFAEKVSSLGKDWHKFCLKCERCSKTLTPGGHAEHDGKPFCHKPCYATLFGPKGVNIGGAGSYIYEKPLAEGPQVTGPIEVPAARAEERKASGPPKGPSRASSVTTFTGEPNTCPRCSKKVYFAEKVTSLGKDWHRPCLRCERCGKTLTPGGHAEHDGQPYCHKPCYGILFGPKGVNTGAVGSYIYDRDPEGKVQP.

The region spanning 5 to 57 (CPKCDKTVYFAEKVSSLGKDWHKFCLKCERCSKTLTPGGHAEHDGKPFCHKPC) is the LIM zinc-binding 1 domain. The residue at position 23 (Lys-23) is an N6-acetyllysine. Residues 98–119 (AEERKASGPPKGPSRASSVTTF) are disordered. Residue Ser-104 is modified to Phosphoserine. In terms of domain architecture, LIM zinc-binding 2 spans 126–178 (CPRCSKKVYFAEKVTSLGKDWHRPCLRCERCGKTLTPGGHAEHDGQPYCHKPC). An N6-acetyllysine mark is found at Lys-138 and Lys-144.

In terms of assembly, interacts with TGFB1I1. In terms of tissue distribution, widespread tissue expression; highest levels in the heart.

The sequence is that of Cysteine-rich protein 2 (CRIP2) from Homo sapiens (Human).